A 607-amino-acid chain; its full sequence is Elongation factor 4 (607 aa).

The tr-type G domain maps to 11 to 193 (SKIRNFSIIA…QIVEKVPAPT (183 aa)). Residues 23-28 (DHGKST) and 140-143 (NKID) contribute to the GTP site.

Belongs to the TRAFAC class translation factor GTPase superfamily. Classic translation factor GTPase family. LepA subfamily.

It is found in the cell membrane. It catalyses the reaction GTP + H2O = GDP + phosphate + H(+). Functionally, required for accurate and efficient protein synthesis under certain stress conditions. May act as a fidelity factor of the translation reaction, by catalyzing a one-codon backward translocation of tRNAs on improperly translocated ribosomes. Back-translocation proceeds from a post-translocation (POST) complex to a pre-translocation (PRE) complex, thus giving elongation factor G a second chance to translocate the tRNAs correctly. Binds to ribosomes in a GTP-dependent manner. The sequence is that of Elongation factor 4 from Bacillus cereus (strain ZK / E33L).